The primary structure comprises 440 residues: D-serine dehydratase (440 aa).

Position 116 is an N6-(pyridoxal phosphate)lysine (K116).

It belongs to the serine/threonine dehydratase family. DsdA subfamily. As to quaternary structure, monomer. The cofactor is pyridoxal 5'-phosphate.

It carries out the reaction D-serine = pyruvate + NH4(+). This Salmonella arizonae (strain ATCC BAA-731 / CDC346-86 / RSK2980) protein is D-serine dehydratase.